The following is a 1089-amino-acid chain: SUMO-specific isopeptidase USPL1 (1089 aa).

Residues 90–128 (LISPDSEDCPTPSKPQKRKRLETNCRNSPLPVHSKKTRS) are disordered. A USP domain is found at 215 to 488 (VQWKNTQALC…ETHIVIWERK (274 aa)). Catalysis depends on cysteine 224, which acts as the Nucleophile. An SUMO-binding region spans residues 224 to 483 (CWLDCILSAL…EVPASETHIV (260 aa)). The active-site Proton acceptor is the histidine 444. Disordered regions lie at residues 687 to 739 (DSQT…KEDQ), 791 to 817 (ISRR…SPPL), 835 to 868 (LREQ…AAED), and 891 to 928 (LISS…CGSP). Over residues 719–733 (TASSKTVAARSAQNQ) the composition is skewed to polar residues. Basic residues predominate over residues 791–803 (ISRRSKRMSRKAK). At serine 894 the chain carries Phosphoserine. The segment covering 895–907 (PHREPSLSDHSEP) has biased composition (basic and acidic residues).

This sequence belongs to the peptidase C19 family. Interacts with ELL.

It is found in the nucleus. It localises to the cajal body. Functionally, SUMO-specific isopeptidase involved in protein desumoylation. Specifically binds SUMO proteins with a higher affinity for SUMO2 and SUMO3 which it cleaves more efficiently. Also able to process full-length SUMO proteins to their mature forms. Plays a key role in RNA polymerase-II-mediated snRNA transcription in the Cajal bodies. Is a component of complexes that can bind to U snRNA genes. The chain is SUMO-specific isopeptidase USPL1 (Uspl1) from Mus musculus (Mouse).